The sequence spans 98 residues: uncharacterized protein (98 aa).

The region spanning 1–85 (MLETVPVRCV…GTLKQALENM (85 aa)) is the STAS domain.

In terms of processing, phosphorylated on threonine residue(s). Phosphorylated by PrkC and dephosphorylated by PrpC.

It is found in the cytoplasm. This is an uncharacterized protein from Bacillus subtilis (strain 168).